The chain runs to 704 residues: MASFGQVINPMTGENTWQERDENYDYHQEVANAGFGDMLHDWERNQKYDAALRKTIAAMREAGREVHVLDIGTGTGILAMMALRAGADTVTACEAFMPMANCAQRILNANGYGDRVRLIRKRSTDIEMGVDMPHRANLLVAELLDTELIGEGAIGIYNHAHNELLTADALCIPARATCYAQAAQSALATQWNSLKMLASLDGDILLKPPAQLLQCSGEAALHDVQLSQLPIDSFHVLTAPTPIFQFDFQRKQAREQQRENILRLQIVRPGSVELIFYWWQIELDDRGEQLLSCAPYWAHPELAQLQRSNSSKPLANVVPWRDHWMQAIYYIPKPLQLHTAGEQFYLRCYHDEYSLWFDAHQTEPPSQPARRHCCTCDLHMTYTRNRIGQLNQGTRNKRYLRYLEQAVHAKESAHLLVLGDGCLLGLASSALGAGSVRCLEPHRFSRRLLGAIAKHNQLKNVSFVESVQQLQPIELAAITHIFAEPYFLNSILPWDNFYFGTLLLQLLEQIPALSVQISPCAARIYALPVEFLDLHKIRTPIGSCEGFDLRLFDDMVQRSAEQAVALVEAQPLWEYPCRALAQPQQLLNVNFDNFGEDKHSHGCLQLTASGDCNGVALWVDWQLAADESPRSIVSSGPSETVVPGQLVKWDMFVRQGVHFISQPTKDRRQTDAGKRQLDWSINFKPRLGELNFNFSLRSSSEKSE.

SAM-dependent MTase PRMT-type domains follow at residues 14–356 (ENTW…YSLW) and 366–704 (SQPA…EKSE).

The protein belongs to the class I-like SAM-binding methyltransferase superfamily. Protein arginine N-methyltransferase family. PRMT7 subfamily.

Essential arginine methyltransferase that can both catalyze the formation of omega-N monomethylarginine (MMA) and symmetrical dimethylarginine (sDMA). Specifically mediates the symmetrical dimethylation of arginine residues in the small nuclear ribonucleoproteins SmD1 and SmD3. This is Protein arginine N-methyltransferase 7 (Art7) from Drosophila grimshawi (Hawaiian fruit fly).